We begin with the raw amino-acid sequence, 627 residues long: DNA mismatch repair protein MutL (627 aa).

Residues 354–364 (DEKPPEKKVPE) are compositionally biased toward basic and acidic residues. The tract at residues 354–374 (DEKPPEKKVPEKSTAPSYSPM) is disordered.

The protein belongs to the DNA mismatch repair MutL/HexB family.

Functionally, this protein is involved in the repair of mismatches in DNA. It is required for dam-dependent methyl-directed DNA mismatch repair. May act as a 'molecular matchmaker', a protein that promotes the formation of a stable complex between two or more DNA-binding proteins in an ATP-dependent manner without itself being part of a final effector complex. Overexpression of mutSL partially suppresses the high spontaneous mutation frequency of a ytkD/mutM/mutY triple disruption which lacks the system required to prevent damage by oxidized guanine (8-oxo-dGTP). This suggests that MutSL also functions to repair mismatches due to oxidative stress in both growing and stationary phase cells. The polypeptide is DNA mismatch repair protein MutL (Bacillus subtilis (strain 168)).